A 196-amino-acid polypeptide reads, in one-letter code: Molybdenum cofactor guanylyltransferase (196 aa).

GTP-binding positions include 12-14 (LAG), lysine 25, asparagine 53, aspartate 71, and aspartate 101. Aspartate 101 contributes to the Mg(2+) binding site.

It belongs to the MobA family. As to quaternary structure, monomer. The cofactor is Mg(2+).

It is found in the cytoplasm. It carries out the reaction Mo-molybdopterin + GTP + H(+) = Mo-molybdopterin guanine dinucleotide + diphosphate. In terms of biological role, transfers a GMP moiety from GTP to Mo-molybdopterin (Mo-MPT) cofactor (Moco or molybdenum cofactor) to form Mo-molybdopterin guanine dinucleotide (Mo-MGD) cofactor. This Bordetella petrii (strain ATCC BAA-461 / DSM 12804 / CCUG 43448) protein is Molybdenum cofactor guanylyltransferase.